An 851-amino-acid polypeptide reads, in one-letter code: Phosphatidate phosphatase LPIN3 (851 aa).

The N-LIP stretch occupies residues 1-108; sequence MNYVGQLAET…VPPGLCTSPI (108 aa). 2 disordered regions span residues 114 to 385 and 400 to 432; these read SGFP…YLDD and QSDS…EPTL. Residues 140–151 show a composition bias toward basic residues; that stretch reads GRRKRRRRRKPK. Positions 141-148 match the Nuclear localization signal motif; that stretch reads RRKRRRRR. Position 159 is a phosphothreonine (threonine 159). Serine 161, serine 162, and serine 224 each carry phosphoserine. Positions 268 to 286 are enriched in low complexity; sequence GRAGATSPPRGGPSTPSTS. Over residues 418 to 429 the composition is skewed to basic and acidic residues; it reads SLRDPNPEHEPE. Serine 463 bears the Phosphoserine mark. Residues 542–559 show a composition bias toward basic and acidic residues; sequence SAQKEKTAAKEQQGEKTE. Positions 542-591 are disordered; the sequence is SAQKEKTAAKEQQGEKTEVLSSDDDAPDSPVILEIPSLPPSTPPSTPTYK. Pro residues predominate over residues 578–587; sequence SLPPSTPPST. Residues 590-792 are C-LIP; that stretch reads YKKSLRLSSD…RIFTVNPRGE (203 aa). The DXDXT motif motif lies at 644-648; that stretch reads DIDGT. An LXXIL motif motif is present at residues 655-659; it reads LGHIL.

The protein belongs to the lipin family. Mg(2+) serves as cofactor. As to expression, significant expression in intestine and other regions of the gastrointestinal tract.

The protein localises to the nucleus. It catalyses the reaction a 1,2-diacyl-sn-glycero-3-phosphate + H2O = a 1,2-diacyl-sn-glycerol + phosphate. Its activity is regulated as follows. Inhibited by N-ethylmaleimide. Its function is as follows. Magnesium-dependent phosphatidate phosphatase enzyme which catalyzes the conversion of phosphatidic acid to diacylglycerol during triglyceride, phosphatidylcholine and phosphatidylethanolamine biosynthesis therefore regulates fatty acid metabolism. The chain is Phosphatidate phosphatase LPIN3 from Homo sapiens (Human).